Reading from the N-terminus, the 459-residue chain is ATP synthase subunit beta (459 aa).

148–155 serves as a coordination point for ATP; it reads GGAGVGKT.

Belongs to the ATPase alpha/beta chains family. F-type ATPases have 2 components, CF(1) - the catalytic core - and CF(0) - the membrane proton channel. CF(1) has five subunits: alpha(3), beta(3), gamma(1), delta(1), epsilon(1). CF(0) has three main subunits: a(1), b(2) and c(9-12). The alpha and beta chains form an alternating ring which encloses part of the gamma chain. CF(1) is attached to CF(0) by a central stalk formed by the gamma and epsilon chains, while a peripheral stalk is formed by the delta and b chains.

The protein localises to the cell inner membrane. It catalyses the reaction ATP + H2O + 4 H(+)(in) = ADP + phosphate + 5 H(+)(out). Produces ATP from ADP in the presence of a proton gradient across the membrane. The catalytic sites are hosted primarily by the beta subunits. This Vesicomyosocius okutanii subsp. Calyptogena okutanii (strain HA) protein is ATP synthase subunit beta.